Here is a 1637-residue protein sequence, read N- to C-terminus: Stress response protein NST1 (1637 aa).

The segment covering 1 to 17 has biased composition (polar residues); sequence MSNRGNLNLNLPPSSGK. 10 disordered regions span residues 1 to 155, 221 to 252, 442 to 494, 504 to 523, 681 to 734, 746 to 825, 871 to 1036, 1049 to 1075, 1176 to 1299, and 1512 to 1534; these read MSNR…EITN, HQAS…HASH, LKMN…SQQL, KNNL…PLQH, KTPY…EIDD, QHHH…EEEK, AKRE…SKHV, SKQN…EENP, NSSQ…GAII, and YTQQ…QYPL. Basic and acidic residues predominate over residues 24 to 33; sequence VHFELSKEKN. Composition is skewed to low complexity over residues 34–53 and 64–113; these read NSTN…SNNT and NDNN…QQQS. The span at 124–134 shows a compositional bias: basic residues; sequence AKKRKKKKSKK. Over residues 135 to 155 the composition is skewed to low complexity; the sequence is SSNNNGNNSNTNSNSNSEITN. A compositionally biased stretch (low complexity) spans 446-470; sequence QRQQSQSQSQSQSQQQRDVQTAQSQ. A compositionally biased stretch (polar residues) spans 471-487; it reads VLSKDSSLKNANTSMNK. The span at 692-706 shows a compositional bias: polar residues; that stretch reads PAATSQDREQQVQPN. The span at 717 to 734 shows a compositional bias: basic and acidic residues; the sequence is DHEHEHEHEHEHEHEIDD. Acidic residues predominate over residues 754–808; sequence EEYDEEDEEDDEEYEYGDDEEEEDEEDEEEGEDEELEEVVEDDVDEEILDDEEEF. A coiled-coil region spans residues 855-1023; it reads KDNTRKLFEE…KQLEKEAAVS (169 aa). Basic and acidic residues-rich tracts occupy residues 871–887 and 896–1021; these read AKRE…EKAK and AKEE…KEAA. Positions 1049–1063 are enriched in polar residues; that stretch reads SKQNQAQNGNQSHLP. A compositionally biased stretch (low complexity) spans 1176 to 1199; that stretch reads NSSQGSPWTTNSTLSSNLGSTGLS. Positions 1201–1228 are enriched in polar residues; that stretch reads GQGQTVSGVNTNLPSSIGITSGGASQIF. The span at 1234-1257 shows a compositional bias: low complexity; sequence PQLQPHQPQQQQQQQQQQQQQQQQ. Residues 1258–1267 show a composition bias toward polar residues; it reads NYFSPFNSFS. 2 stretches are compositionally biased toward low complexity: residues 1282–1299 and 1514–1534; these read TTNI…GAII and QQQQ…QYPL.

Belongs to the NST1 family.

It localises to the cytoplasm. In terms of biological role, may act as a negative regulator of salt tolerance. In Lodderomyces elongisporus (strain ATCC 11503 / CBS 2605 / JCM 1781 / NBRC 1676 / NRRL YB-4239) (Yeast), this protein is Stress response protein NST1 (NST1).